We begin with the raw amino-acid sequence, 177 residues long: Large ribosomal subunit protein uL6 (177 aa).

It belongs to the universal ribosomal protein uL6 family. As to quaternary structure, part of the 50S ribosomal subunit.

Its function is as follows. This protein binds to the 23S rRNA, and is important in its secondary structure. It is located near the subunit interface in the base of the L7/L12 stalk, and near the tRNA binding site of the peptidyltransferase center. This is Large ribosomal subunit protein uL6 from Nitrosospira multiformis (strain ATCC 25196 / NCIMB 11849 / C 71).